A 234-amino-acid chain; its full sequence is Ribose-5-phosphate isomerase A (234 aa).

Substrate is bound by residues 34–37, 90–93, and 103–106; these read TGST, DGAD, and KGGG. Residue E112 is the Proton acceptor of the active site. K130 contacts substrate.

This sequence belongs to the ribose 5-phosphate isomerase family. In terms of assembly, homodimer.

It carries out the reaction aldehydo-D-ribose 5-phosphate = D-ribulose 5-phosphate. The protein operates within carbohydrate degradation; pentose phosphate pathway; D-ribose 5-phosphate from D-ribulose 5-phosphate (non-oxidative stage): step 1/1. Catalyzes the reversible conversion of ribose-5-phosphate to ribulose 5-phosphate. In Methanosarcina acetivorans (strain ATCC 35395 / DSM 2834 / JCM 12185 / C2A), this protein is Ribose-5-phosphate isomerase A.